A 750-amino-acid polypeptide reads, in one-letter code: Methylmalonyl-CoA mutase, mitochondrial (750 aa).

A mitochondrion-targeting transit peptide spans 1–32 (MLRAKNQLFLLSPHYLKQVKESSGSRLIQQRL). Residue glutamine 50 coordinates malonyl-CoA. Lysine 89 carries the N6-acetyllysine modification. Malonyl-CoA-binding positions include 96–99 (YPTM) and 106–110 (TIRQY). An N6-acetyllysine modification is found at lysine 212. Malonyl-CoA-binding positions include 216–218 (TIQ), arginine 228, lysine 255, histidine 265, and 304–306 (RLS). Lysine 335 is subject to N6-acetyllysine. An N6-succinyllysine modification is found at lysine 343. Serine 481 is modified (phosphoserine). Lysine 595 carries the post-translational modification N6-succinyllysine. N6-acetyllysine is present on lysine 602. Residues 614-746 (RPRLLVAKMG…DDIEKCLEKK (133 aa)) enclose the B12-binding domain. Histidine 627 serves as a coordination point for adenosylcob(III)alamin.

This sequence belongs to the methylmalonyl-CoA mutase family. As to quaternary structure, homodimer. Interacts (the apoenzyme form) with MMAA; the interaction is GTP dependent. Adenosylcob(III)alamin serves as cofactor.

Its subcellular location is the mitochondrion matrix. It localises to the mitochondrion. It is found in the cytoplasm. It carries out the reaction (R)-methylmalonyl-CoA = succinyl-CoA. Its activity is regulated as follows. Inhibited by itaconyl-CoA, a metabolite that inactivates the coenzyme B12 cofactor. Its function is as follows. Catalyzes the reversible isomerization of methylmalonyl-CoA (MMCoA) (generated from branched-chain amino acid metabolism and degradation of dietary odd chain fatty acids and cholesterol) to succinyl-CoA (3-carboxypropionyl-CoA), a key intermediate of the tricarboxylic acid cycle. The protein is Methylmalonyl-CoA mutase, mitochondrial (MMUT) of Pongo abelii (Sumatran orangutan).